The sequence spans 72 residues: Phaiodotoxin-3 (72 aa).

The LCN-type CS-alpha/beta domain occupies 1–72 (KFIRHKDESF…CFGALESKCA (72 aa)). Cystine bridges form between Cys13/Cys38, Cys23/Cys50, Cys27/Cys52, and Cys63/Cys71.

The protein belongs to the long (4 C-C) scorpion toxin superfamily. Sodium channel inhibitor family. As to expression, expressed by the venom gland.

The protein localises to the secreted. Sodium channel (Nav) specific neurotoxin. The chain is Phaiodotoxin-3 from Anuroctonus phaiodactylus (Mafia scorpion).